We begin with the raw amino-acid sequence, 104 residues long: ATP-dependent Clp protease adapter protein ClpS (104 aa).

It belongs to the ClpS family. In terms of assembly, binds to the N-terminal domain of the chaperone ClpA.

In terms of biological role, involved in the modulation of the specificity of the ClpAP-mediated ATP-dependent protein degradation. This chain is ATP-dependent Clp protease adapter protein ClpS, found in Bordetella avium (strain 197N).